Here is a 449-residue protein sequence, read N- to C-terminus: Putative F-box/LRR-repeat protein At3g44090 (449 aa).

Residues 23–77 (LASMDCLPDDLLVQILYFLPTKEAISTSLLSKRWRTLYSLVHNLDLDDYIFWHHE) form the F-box domain. LRR repeat units follow at residues 133-163 (YYNL…SLGT), 186-212 (YIWF…TIHH), 214-231 (FRPF…SVTI), 247-278 (TPNV…ELDL), 286-311 (RQVQ…HLTY), and 320-345 (SKKR…VLSG).

The sequence is that of Putative F-box/LRR-repeat protein At3g44090 from Arabidopsis thaliana (Mouse-ear cress).